Consider the following 132-residue polypeptide: Large ribosomal subunit protein uL14 (132 aa).

Belongs to the universal ribosomal protein uL14 family. In terms of assembly, part of the 50S ribosomal subunit. Forms a cluster with proteins L3 and L24e, part of which may contact the 16S rRNA in 2 intersubunit bridges.

Binds to 23S rRNA. Forms part of two intersubunit bridges in the 70S ribosome. The polypeptide is Large ribosomal subunit protein uL14 (Methanothrix thermoacetophila (strain DSM 6194 / JCM 14653 / NBRC 101360 / PT) (Methanosaeta thermophila)).